The following is a 92-amino-acid chain: Small ribosomal subunit protein bS18 (92 aa).

The disordered stretch occupies residues 1–27; it reads MTQQSNSADRKPRGKGPKRPRKPKVDP. Positions 12–22 are enriched in basic residues; the sequence is PRGKGPKRPRK.

This sequence belongs to the bacterial ribosomal protein bS18 family. As to quaternary structure, part of the 30S ribosomal subunit. Forms a tight heterodimer with protein bS6.

Its function is as follows. Binds as a heterodimer with protein bS6 to the central domain of the 16S rRNA, where it helps stabilize the platform of the 30S subunit. In Deinococcus deserti (strain DSM 17065 / CIP 109153 / LMG 22923 / VCD115), this protein is Small ribosomal subunit protein bS18.